A 252-amino-acid polypeptide reads, in one-letter code: PF03932 family protein CutC (252 aa).

The protein belongs to the CutC family.

The protein resides in the cytoplasm. The protein is PF03932 family protein CutC of Sodalis glossinidius (strain morsitans).